A 233-amino-acid polypeptide reads, in one-letter code: U2 small nuclear ribonucleoprotein A' (233 aa).

LRR repeat units follow at residues 20–40, 42–63, 65–86, and 89–110; these read KLTL…AITQ, KYQV…PKRF, NLQC…SFPS, and HITS…FKDK. The region spanning 122–160 is the LRRCT domain; that stretch reads NPITEMENYRYFIIWLIPSLKVLDFKKVKQAERKTSEDM.

The protein belongs to the U2 small nuclear ribonucleoprotein A family. As to quaternary structure, associated with the spliceosome.

Its subcellular location is the nucleus. In terms of biological role, involved in pre-mRNA splicing. The chain is U2 small nuclear ribonucleoprotein A' (LEA1) from Candida albicans (strain SC5314 / ATCC MYA-2876) (Yeast).